A 1182-amino-acid polypeptide reads, in one-letter code: Rho GTPase-activating protein 20 (1182 aa).

A disordered region spans residues 1–40 (MEAMSPQQDALGAQPGRSSSLTGMSRIAGGPGTKKKMKTL). Ser-46 carries the post-translational modification Phosphoserine. Positions 86–187 (LLIDGPVELK…SLLQRYIALE (102 aa)) constitute a PH domain. The 90-residue stretch at 194–283 (KSIPLKIFAK…TALLTQGSKD (90 aa)) folds into the Ras-associating domain. A Rho-GAP domain is found at 365–551 (VSLPDICEND…FLIENCCRIF (187 aa)). Phosphoserine is present on residues Ser-704 and Ser-730. Disordered regions lie at residues 744–791 (KQTQ…IQET), 932–953 (ASYSSLSSPGTSPSGSSVSSQD), 981–1009 (QRKQEELSSDCDSPSLVSGMPGPSTGQAS), and 1140–1182 (EESG…GDRH). Residues 757–775 (FKQSSVTGTDVSKRNTANE) show a composition bias toward polar residues. The span at 933–953 (SYSSLSSPGTSPSGSSVSSQD) shows a compositional bias: low complexity.

In terms of tissue distribution, highest expression is found in testis. Ubiquitously expressed in extragonadal tissues.

Functionally, GTPase activator for the Rho-type GTPases by converting them to an inactive GDP-bound state. The sequence is that of Rho GTPase-activating protein 20 (Arhgap20) from Rattus norvegicus (Rat).